We begin with the raw amino-acid sequence, 75 residues long: UPF0346 protein LGAS_0911 (75 aa).

The protein belongs to the UPF0346 family.

The sequence is that of UPF0346 protein LGAS_0911 from Lactobacillus gasseri (strain ATCC 33323 / DSM 20243 / BCRC 14619 / CIP 102991 / JCM 1131 / KCTC 3163 / NCIMB 11718 / NCTC 13722 / AM63).